Reading from the N-terminus, the 210-residue chain is Na(+)-translocating NADH-quinone reductase subunit D (210 aa).

The next 6 helical transmembrane spans lie at 14-34, 42-62, 72-92, 103-123, 131-151, and 178-198; these read PIVS…ALAV, LVMT…ISML, IIVQ…VLQA, VFVG…AYAM, FMDG…VGFV, and NGLL…IWII.

Belongs to the NqrDE/RnfAE family. In terms of assembly, composed of six subunits; NqrA, NqrB, NqrC, NqrD, NqrE and NqrF.

It localises to the cell inner membrane. The catalysed reaction is a ubiquinone + n Na(+)(in) + NADH + H(+) = a ubiquinol + n Na(+)(out) + NAD(+). NQR complex catalyzes the reduction of ubiquinone-1 to ubiquinol by two successive reactions, coupled with the transport of Na(+) ions from the cytoplasm to the periplasm. NqrA to NqrE are probably involved in the second step, the conversion of ubisemiquinone to ubiquinol. The chain is Na(+)-translocating NADH-quinone reductase subunit D from Shewanella woodyi (strain ATCC 51908 / MS32).